Reading from the N-terminus, the 437-residue chain is ATP-dependent protease ATPase subunit HslU (437 aa).

Residues Val-18, 60 to 65, Asp-250, Glu-315, and Arg-387 each bind ATP; that span reads GCGKTE.

It belongs to the ClpX chaperone family. HslU subfamily. As to quaternary structure, a double ring-shaped homohexamer of HslV is capped on each side by a ring-shaped HslU homohexamer. The assembly of the HslU/HslV complex is dependent on binding of ATP.

It is found in the cytoplasm. Its function is as follows. ATPase subunit of a proteasome-like degradation complex; this subunit has chaperone activity. The binding of ATP and its subsequent hydrolysis by HslU are essential for unfolding of protein substrates subsequently hydrolyzed by HslV. HslU recognizes the N-terminal part of its protein substrates and unfolds these before they are guided to HslV for hydrolysis. This chain is ATP-dependent protease ATPase subunit HslU, found in Methylorubrum extorquens (strain PA1) (Methylobacterium extorquens).